The following is a 214-amino-acid chain: Molybdenum cofactor guanylyltransferase (214 aa).

Residues 18–20 (LAG), lysine 31, aspartate 77, and aspartate 112 contribute to the GTP site. Aspartate 112 contacts Mg(2+).

The protein belongs to the MobA family. In terms of assembly, monomer. Mg(2+) serves as cofactor.

The protein resides in the cytoplasm. It catalyses the reaction Mo-molybdopterin + GTP + H(+) = Mo-molybdopterin guanine dinucleotide + diphosphate. Its function is as follows. Transfers a GMP moiety from GTP to Mo-molybdopterin (Mo-MPT) cofactor (Moco or molybdenum cofactor) to form Mo-molybdopterin guanine dinucleotide (Mo-MGD) cofactor. This chain is Molybdenum cofactor guanylyltransferase, found in Rhodopseudomonas palustris (strain HaA2).